Reading from the N-terminus, the 297-residue chain is Phosphoribosylaminoimidazole-succinocarboxamide synthase (297 aa).

The protein belongs to the SAICAR synthetase family.

It catalyses the reaction 5-amino-1-(5-phospho-D-ribosyl)imidazole-4-carboxylate + L-aspartate + ATP = (2S)-2-[5-amino-1-(5-phospho-beta-D-ribosyl)imidazole-4-carboxamido]succinate + ADP + phosphate + 2 H(+). It participates in purine metabolism; IMP biosynthesis via de novo pathway; 5-amino-1-(5-phospho-D-ribosyl)imidazole-4-carboxamide from 5-amino-1-(5-phospho-D-ribosyl)imidazole-4-carboxylate: step 1/2. This is Phosphoribosylaminoimidazole-succinocarboxamide synthase from Methylobacillus flagellatus (strain ATCC 51484 / DSM 6875 / VKM B-1610 / KT).